The chain runs to 154 residues: Putative F-box protein At2g11200 (154 aa).

The 47-residue stretch at 5-51 (TTAMSDLPRDLEEEVLSRVQLASLRAVRTTCKKWNRRLSKYRFTKKY) folds into the F-box domain.

The sequence is that of Putative F-box protein At2g11200 from Arabidopsis thaliana (Mouse-ear cress).